Consider the following 313-residue polypeptide: Cytochrome c biogenesis protein CcsA (313 aa).

The next 8 helical transmembrane spans lie at 13-35, 43-63, 67-87, 96-116, 142-162, 219-239, 252-269, and 280-300; these read ISFSIISIVITTHLMTFAREIAG, GMIAVFLRITGLLVTRWIYSG, LSNLYESLIFLSWGFSLIHMI, FLSSITAPSAILTQGFVTSGL, MLLSYAALLCGSLLSIALLVI, VIGIGFTLLTLGILSGAVWAN, ETWAFITWTISAIYLHTR, and AIVASIGFLIIWICYFGVNLL.

Belongs to the CcmF/CycK/Ccl1/NrfE/CcsA family. May interact with Ccs1.

The protein resides in the plastid. The protein localises to the chloroplast thylakoid membrane. Its function is as follows. Required during biogenesis of c-type cytochromes (cytochrome c6 and cytochrome f) at the step of heme attachment. The polypeptide is Cytochrome c biogenesis protein CcsA (Amborella trichopoda).